A 346-amino-acid polypeptide reads, in one-letter code: Methylthioribose-1-phosphate isomerase (346 aa).

Substrate is bound by residues 47-49 (RGA), Arg88, and Gln195. Asp236 (proton donor) is an active-site residue. 246–247 (NK) lines the substrate pocket.

The protein belongs to the eIF-2B alpha/beta/delta subunits family. MtnA subfamily.

It carries out the reaction 5-(methylsulfanyl)-alpha-D-ribose 1-phosphate = 5-(methylsulfanyl)-D-ribulose 1-phosphate. It participates in amino-acid biosynthesis; L-methionine biosynthesis via salvage pathway; L-methionine from S-methyl-5-thio-alpha-D-ribose 1-phosphate: step 1/6. Its function is as follows. Catalyzes the interconversion of methylthioribose-1-phosphate (MTR-1-P) into methylthioribulose-1-phosphate (MTRu-1-P). The sequence is that of Methylthioribose-1-phosphate isomerase from Maridesulfovibrio salexigens (strain ATCC 14822 / DSM 2638 / NCIMB 8403 / VKM B-1763) (Desulfovibrio salexigens).